The sequence spans 146 residues: Large-conductance mechanosensitive channel (146 aa).

3 consecutive transmembrane segments (helical) span residues 21-41 (VGIIIGAAFTGIVSSLVADLI), 44-64 (VIGLITGGIDFSNVFVNLGDG), and 83-103 (GAFITAVINFLIIAWVVFLLV).

Belongs to the MscL family. As to quaternary structure, homopentamer.

Its subcellular location is the cell inner membrane. Functionally, channel that opens in response to stretch forces in the membrane lipid bilayer. May participate in the regulation of osmotic pressure changes within the cell. The sequence is that of Large-conductance mechanosensitive channel from Cereibacter sphaeroides (strain ATCC 17025 / ATH 2.4.3) (Rhodobacter sphaeroides).